Here is a 118-residue protein sequence, read N- to C-terminus: MKRIAFVFSTAPHGSTSGREGLDALLATSALTEALGVFFISDGVFQLLPGQKPDAVLARDYIATFKLFDLYDIDQCWICAASLRERGLENVNFVVDATPLEPVALRRELGNYDVILRF.

It belongs to the DsrF/TusC family. In terms of assembly, heterohexamer, formed by a dimer of trimers. The hexameric TusBCD complex contains 2 copies each of TusB, TusC and TusD. The TusBCD complex interacts with TusE.

The protein resides in the cytoplasm. Functionally, part of a sulfur-relay system required for 2-thiolation of 5-methylaminomethyl-2-thiouridine (mnm(5)s(2)U) at tRNA wobble positions. In Salmonella paratyphi C (strain RKS4594), this protein is Protein TusC.